The following is an 891-amino-acid chain: MTDTTIQSFAAEMKMSVDQLIQWFSYIGILKTEIGIVTQREKEILFKYMNDNKSDISKKLILQRKTRSILSVSSVGGKNKKVQIEIRKKLTYVQSTLQETEFIDVKNKMVLDANREASSLIVRNNRLVNKKISNTLGPSSLTKISKKNHRYSELIEHKEKVIGKISRKFEDKSLQDSDETQLLKKKTKNCWDIELNNTNAISSNLGDSSSNSKLYCMPELLEKNNNQKLENERRNRSRVRTRYRNGGKLTKQHKRGNHHRLYEATSDEFGMEEELYIPNRVNKSKRKQSALVQVFNKPVQTITRDIIIGQTISVAELANKMSIKSSRVIKTMMQLGIIATINQIIDQDTAQLVAEEMGHNVILRRENELEELIMNDRDIDITSSDTTLANRAPIVTIMGHVDHGKTSLLDRIRSTKIASSEVGGITQSIGAYHVSTDNGMITFLDTPGHAAFTAMRARGVQITDIVVLVVAADDGVMPQTIEAIEHIKAANVPVVVAINKIDKSEANPERIKNDLNNHGLIPEEWGGDTQFIHVSATSGNGIDNLLDAILLQSDMLELKVVHHGMARAIVIESFLDKGRGPVVAVLVREGTLKCGDIILCGTEYGRVRAMRNEFGHEITSAGPSIPVELLGLSGSPASGESVIVVRNEKKAREVALYRQGKSREIKLARQKEPNIENIFSSIKNTSVVSELNLIVKSDTKGSSEAIRESLENLSTGGDVTIKILSSSIGGITETDVALAAASNAVIVGFNVRADPTARRIIEADQLDVRYYSVIYDLIDEVKQAVHGMLAPRYKHEIIGLAKVRNVFRSPKYGNVAGCMVVEGMIKRYKKIRVIRDNIVVHEGELESLRRFKDDVNEVRSGIECGIGIKNYKNIHSGDMIEVFDMVKISHV.

The tr-type G domain maps to 390-559 (NRAPIVTIMG…LLQSDMLELK (170 aa)). The segment at 399–406 (GHVDHGKT) is G1. 399–406 (GHVDHGKT) contacts GTP. A G2 region spans residues 424–428 (GITQS). Positions 445 to 448 (DTPG) are G3. GTP contacts are provided by residues 445-449 (DTPGH) and 499-502 (NKID). The segment at 499–502 (NKID) is G4. The G5 stretch occupies residues 535 to 537 (SAT).

Belongs to the TRAFAC class translation factor GTPase superfamily. Classic translation factor GTPase family. IF-2 subfamily.

The protein localises to the cytoplasm. Functionally, one of the essential components for the initiation of protein synthesis. Protects formylmethionyl-tRNA from spontaneous hydrolysis and promotes its binding to the 30S ribosomal subunits. Also involved in the hydrolysis of GTP during the formation of the 70S ribosomal complex. The protein is Translation initiation factor IF-2 of Blochmanniella pennsylvanica (strain BPEN).